The primary structure comprises 151 residues: MKVIFMQDVKGRGKLGQVKDVPNGYAQNYLIKQGLAKEANKGNLNTLKRVEANEKAEYEAQKAAAQEIKKQLEADETVVELKAKAGSDSRLFGSISSKKIIEGLDKQFGIKLDKHKLELREPIKVLGYTNVPVKLFKGVESKVRVHVTQEN.

It belongs to the bacterial ribosomal protein bL9 family.

Its function is as follows. Binds to the 23S rRNA. The polypeptide is Large ribosomal subunit protein bL9 (Lactobacillus delbrueckii subsp. bulgaricus (strain ATCC 11842 / DSM 20081 / BCRC 10696 / JCM 1002 / NBRC 13953 / NCIMB 11778 / NCTC 12712 / WDCM 00102 / Lb 14)).